The sequence spans 428 residues: Dihydroorotase (428 aa).

The Zn(2+) site is built by histidine 59 and histidine 61. Residues 61–63 (HLR) and asparagine 93 each bind substrate. Zn(2+) contacts are provided by aspartate 151, histidine 178, and histidine 231. Asparagine 277 is a substrate binding site. Aspartate 304 contacts Zn(2+). The active site involves aspartate 304. Substrate is bound by residues histidine 308 and 322 to 323 (FG).

It belongs to the metallo-dependent hydrolases superfamily. DHOase family. Class I DHOase subfamily. Zn(2+) is required as a cofactor.

It catalyses the reaction (S)-dihydroorotate + H2O = N-carbamoyl-L-aspartate + H(+). It participates in pyrimidine metabolism; UMP biosynthesis via de novo pathway; (S)-dihydroorotate from bicarbonate: step 3/3. Catalyzes the reversible cyclization of carbamoyl aspartate to dihydroorotate. This Bacillus cereus (strain ATCC 14579 / DSM 31 / CCUG 7414 / JCM 2152 / NBRC 15305 / NCIMB 9373 / NCTC 2599 / NRRL B-3711) protein is Dihydroorotase.